We begin with the raw amino-acid sequence, 448 residues long: Exodeoxyribonuclease 7 large subunit (448 aa).

It belongs to the XseA family. In terms of assembly, heterooligomer composed of large and small subunits.

It localises to the cytoplasm. It carries out the reaction Exonucleolytic cleavage in either 5'- to 3'- or 3'- to 5'-direction to yield nucleoside 5'-phosphates.. Bidirectionally degrades single-stranded DNA into large acid-insoluble oligonucleotides, which are then degraded further into small acid-soluble oligonucleotides. The polypeptide is Exodeoxyribonuclease 7 large subunit (Photobacterium profundum (strain SS9)).